Here is a 423-residue protein sequence, read N- to C-terminus: uncharacterized protein (423 aa).

The protein belongs to the asfivirus E423R family.

Its subcellular location is the virion. This is an uncharacterized protein from African swine fever virus (isolate Tick/South Africa/Pretoriuskop Pr4/1996) (ASFV).